Consider the following 488-residue polypeptide: Proline--tRNA ligase (488 aa).

This sequence belongs to the class-II aminoacyl-tRNA synthetase family. ProS type 3 subfamily. In terms of assembly, homodimer.

The protein localises to the cytoplasm. It catalyses the reaction tRNA(Pro) + L-proline + ATP = L-prolyl-tRNA(Pro) + AMP + diphosphate. In terms of biological role, catalyzes the attachment of proline to tRNA(Pro) in a two-step reaction: proline is first activated by ATP to form Pro-AMP and then transferred to the acceptor end of tRNA(Pro). This is Proline--tRNA ligase from Borreliella burgdorferi (strain ZS7) (Borrelia burgdorferi).